The sequence spans 181 residues: Insulin-like growth factor 2 (181 aa).

The N-terminal stretch at 1–24 (MGIPVGKSLLMLFTFLAFASCCIA) is a signal peptide. The interval 25 to 52 (AYRPSETLCGGELVDTLQFVCGDRGFYF) is b. Cystine bridges form between Cys33–Cys71, Cys45–Cys84, and Cys70–Cys75. A c region spans residues 53–64 (SRPASRINRRSR). The segment at 65–85 (GIVEECCFRSCDLALLETYCA) is a. Positions 86–91 (TPAKSE) are d. The propeptide at 92-181 (RDVSTPPTVL…AFVEVSSDLQ (90 aa)) is e peptide. Thr163 is a glycosylation site (O-linked (GalNAc...) threonine).

This sequence belongs to the insulin family. Interacts with MYORG; this interaction is required for IGF2 secretion. Interacts with integrins ITGAV:ITGB3 and ITGA6:ITGB4; integrin-binding is required for IGF2 signaling. Interacts with IGFBP2. Post-translationally, proteolytically processed by PCSK4, proIGF2 is cleaved at Arg-128 and Arg-92 to generate big-IGF2 and mature IGF2.

The protein localises to the secreted. The insulin-like growth factors possess growth-promoting activity. Major fetal growth hormone in mammals. Plays a key role in regulating fetoplacental development. IGF2 is influenced by placental lactogen. Also involved in tissue differentiation. In adults, involved in glucose metabolism in adipose tissue, skeletal muscle and liver. Acts as a ligand for integrin which is required for IGF2 signaling. Positively regulates myogenic transcription factor MYOD1 function by facilitating the recruitment of transcriptional coactivators, thereby controlling muscle terminal differentiation. Inhibits myoblast differentiation and modulates metabolism via increasing the mitochondrial respiration rate. Functionally, preptin undergoes glucose-mediated co-secretion with insulin, and acts as a physiological amplifier of glucose-mediated insulin secretion. Exhibits osteogenic properties by increasing osteoblast mitogenic activity through phosphoactivation of MAPK1 and MAPK3. The chain is Insulin-like growth factor 2 from Equus caballus (Horse).